A 612-amino-acid chain; its full sequence is Apoptosis-inducing factor 1, mitochondrial (612 aa).

2 short sequence motifs (mitochondrial localization signal) span residues 1 to 30 (MFRCGGLAGAFKQKLVPLVRTVYVQRPKQR) and 62 to 88 (KMDNSVLVLIVGLSTIGAGAYAYKTIK). Residues 1–54 (MFRCGGLAGAFKQKLVPLVRTVYVQRPKQRNRLPGNLFQQWRVPLELQMARQMA) constitute a mitochondrion transit peptide. Positions 55–101 (SSGSSGGKMDNSVLVLIVGLSTIGAGAYAYKTIKEDQKRYNERVMGL) are cleaved as a propeptide — removed in mature form. N6-succinyllysine is present on Lys-108. At Ser-115 the chain carries Phosphoserine. Residues 133–482 (FLLIGGGTAA…KPYWHQSMFW (350 aa)) form an FAD-dependent oxidoreductase region. Residues 137 to 141 (GGGTA), 163 to 164 (ED), Arg-171, and Lys-176 each bind FAD. Trp-195 is a binding site for NAD(+). Position 232 (Val-232) interacts with FAD. A Glycyl lysine isopeptide (Lys-Gly) (interchain with G-Cter in ubiquitin) cross-link involves residue Lys-254. Ser-267 carries the post-translational modification Phosphoserine. Arg-284 serves as a coordination point for FAD. Residues 307-310 (GGFL), Glu-335, and Lys-341 each bind NAD(+). Ser-370 is subject to Phosphoserine. Position 387 is an N6-acetyllysine (Lys-387). Gly-398 provides a ligand contact to NAD(+). Asp-437 contacts FAD. Positions 445–450 (KLGRRR) match the Nuclear localization signal motif. Residues 452-453 (EH), Trp-482, and Glu-492 each bind NAD(+). Residues 453–454 (HH) and Trp-482 contribute to the FAD site. Residues 512–528 (AQDNPKSATEQSGTGIR) show a composition bias toward polar residues. The disordered stretch occupies residues 512-551 (AQDNPKSATEQSGTGIRSESETESEASEITIPPSAPAVPQ). Thr-520 carries the post-translational modification Phosphothreonine. Phosphoserine is present on residues Ser-523 and Ser-529. Asn-582 serves as a coordination point for NAD(+). Residue Lys-592 is modified to N6-acetyllysine.

It belongs to the FAD-dependent oxidoreductase family. In terms of assembly, monomer (oxidized form). Homodimer (reduced form). Upon reduction with NADH, undergoes dimerization and forms tight, long-lived FADH2-NAD charge transfer complexes (CTC) resistant to oxidation. Also dimerizes with isoform 3 preventing its release from mitochondria. Interacts with XIAP/BIRC4. Interacts (via N-terminus) with EIF3G (via C-terminus). Interacts with PRELID1. Interacts with CHCHD4; the interaction increases in presence of NADH. Interacts with processed form of PARP1 (Poly [ADP-ribose] polymerase 1, processed C-terminus); interaction is mediated with poly-ADP-ribose chains attached to PARP1, promoting translocation into the nucleus. The cofactor is FAD. Post-translationally, under normal conditions, a 54-residue N-terminal segment is first proteolytically removed during or just after translocation into the mitochondrial intermembrane space (IMS) by the mitochondrial processing peptidase (MPP) to form the inner-membrane-anchored mature form (AIFmit). During apoptosis, it is further proteolytically processed at amino-acid position 101 leading to the generation of the mature form, which is confined to the mitochondrial IMS in a soluble form (AIFsol). AIFsol is released to the cytoplasm in response to specific death signals, and translocated to the nucleus, where it induces nuclear apoptosis in a caspase-independent manner. In terms of processing, ubiquitination by XIAP/BIRC4 does not lead to proteasomal degradation. Ubiquitination at Lys-254 by XIAP/BIRC4 blocks its ability to bind DNA and induce chromatin degradation, thereby inhibiting its ability to induce cell death. Expressed in cortical neurons (at protein level). In terms of tissue distribution, expressed in liver (at protein level).

Its subcellular location is the mitochondrion intermembrane space. The protein localises to the mitochondrion inner membrane. It is found in the cytoplasm. The protein resides in the nucleus. It localises to the perinuclear region. Its subcellular location is the mitochondrion. The protein localises to the cytosol. It carries out the reaction A + NADH + H(+) = AH2 + NAD(+). Functions both as NADH oxidoreductase and as regulator of apoptosis. In response to apoptotic stimuli, it is released from the mitochondrion intermembrane space into the cytosol and to the nucleus, where it functions as a proapoptotic factor in a caspase-independent pathway. Release into the cytoplasm is mediated upon binding to poly-ADP-ribose chains. The soluble form (AIFsol) found in the nucleus induces 'parthanatos' i.e. caspase-independent fragmentation of chromosomal DNA. Binds to DNA in a sequence-independent manner. Interacts with EIF3G, and thereby inhibits the EIF3 machinery and protein synthesis, and activates caspase-7 to amplify apoptosis. Plays a critical role in caspase-independent, pyknotic cell death in hydrogen peroxide-exposed cells. In contrast, participates in normal mitochondrial metabolism. Plays an important role in the regulation of respiratory chain biogenesis by interacting with CHCHD4 and controlling CHCHD4 mitochondrial import. This Mus musculus (Mouse) protein is Apoptosis-inducing factor 1, mitochondrial.